The following is a 265-amino-acid chain: MIKWPWKAQEITQNEDWPWDNALAIPLLVNLTAQEQARLIALAERFLQQKRLVALQGFELDSLKSARIALIFCLPILELGIEWLDGFHEVLIYPAPFVVDDEWEDDIGLVHSQRVVQSGQSWQQGPIILNWLDIQDSFDASGFNLIIHEVAHKLDMRNGDRASGIPFIPLRDVAGWEHDLHAAMNNIQDEIDLVGESAASIDAYAATDPAECFAVLSEYFFSAPELFAPRFPALWQRFCQFYRQDPSQRLRVSAAEGDYGEESEH.

Residues histidine 111, histidine 148, histidine 152, and glutamate 211 each coordinate Zn(2+).

The protein belongs to the MtfA family. In terms of assembly, interacts with Mlc. Zn(2+) serves as cofactor.

The protein localises to the cytoplasm. Involved in the modulation of the activity of the glucose-phosphotransferase system (glucose-PTS). Interacts with the transcriptional repressor Mlc, preventing its interaction with DNA and leading to the modulation of expression of genes regulated by Mlc, including ptsG, which encodes the PTS system glucose-specific EIICB component. Functionally, shows zinc-dependent metallopeptidase activity. In Salmonella choleraesuis (strain SC-B67), this protein is Mlc titration factor A.